A 337-amino-acid chain; its full sequence is Dihydroorotate dehydrogenase (quinone) (337 aa).

Residues Ala62–Lys66 and Thr86 contribute to the FMN site. Residue Lys66 participates in substrate binding. Asn111 to Phe115 contacts substrate. FMN-binding residues include Asn139 and Asn172. Residue Asn172 participates in substrate binding. The active-site Nucleophile is the Ser175. Asn177 contacts substrate. Positions 217 and 245 each coordinate FMN. Residue Asn246–Thr247 participates in substrate binding. FMN contacts are provided by residues Gly268, Gly297, and Tyr318–Ser319.

The protein belongs to the dihydroorotate dehydrogenase family. Type 2 subfamily. Monomer. FMN serves as cofactor.

It is found in the cell membrane. It carries out the reaction (S)-dihydroorotate + a quinone = orotate + a quinol. It functions in the pathway pyrimidine metabolism; UMP biosynthesis via de novo pathway; orotate from (S)-dihydroorotate (quinone route): step 1/1. Its function is as follows. Catalyzes the conversion of dihydroorotate to orotate with quinone as electron acceptor. The protein is Dihydroorotate dehydrogenase (quinone) of Methylobacillus flagellatus (strain ATCC 51484 / DSM 6875 / VKM B-1610 / KT).